The following is a 77-amino-acid chain: Integrin beta-2 (77 aa).

An intrachain disulfide couples Cys-36 to Cys-43. A glycan (N-linked (GlcNAc...) asparagine) is linked at Asn-54.

Belongs to the integrin beta chain family. As to quaternary structure, dimer of an alpha and beta subunit.

Its subcellular location is the membrane. Functionally, integrins are a large family of cell surface glycoproteins that mediate cell to cell and cell to matrix adhesion. The polypeptide is Integrin beta-2 (itgb2) (Xenopus laevis (African clawed frog)).